The sequence spans 415 residues: Protrudin (415 aa).

Positions 1-24 (MQTSDRDLSGPEASPSGMPEVLSE) are disordered. Over 1–66 (MQTSDRDLSG…AGDGVRYLLR (66 aa)) the chain is Cytoplasmic. The interval 1–92 (MQTSDRDLSG…LFLTLNEGAW (92 aa)) is sufficient for homooligomerization. The segment at 1–210 (MQTSDRDLSG…LYLLPLCWVL (210 aa)) is sufficient for localization to endoplasmic reticulum tubular network and for interactions with REEP1, REEP5, ATL1, ATL2, ATL3 and SPAST. The interval 51–64 (LEPLKDAGDGVRYL) is necessary for interaction with RAB11A and function in neurite outgrowth. Residues 67-87 (WQMPLCSLLTCLGLNILFLTL) form a helical membrane-spanning segment. Position 88 (Asn88) is a topological domain, lumenal. Residues 89–109 (EGAWYSMGALMISVPALLGYL) traverse the membrane as a helical segment. Over 110 to 192 (QEVCRGQLPE…NPVVSSQFYG (83 aa)) the chain is Cytoplasmic. The helical intramembrane region spans 193–213 (ALLGMVCMLYLLPLCWVLALL). The Cytoplasmic portion of the chain corresponds to 214 to 415 (NSTLFLGNGD…CASCNQTLSK (202 aa)). Positions 254–290 (QGAGGRGLLDSSPAPTPTEDLTPGSVEEAEEAEPDEE) are disordered. A necessary for interaction with KIF5A region spans residues 275–365 (TPGSVEEAEE…GCAATFSVLK (91 aa)). Acidic residues predominate over residues 280–290 (EEAEEAEPDEE). Residues 290-296 (EFKDAIE) are necessary for interaction with VAPA. The segment at 348 to 414 (TNNFGNCAGC…VCASCNQTLS (67 aa)) adopts an FYVE-type zinc-finger fold. The Zn(2+) site is built by Cys354, Cys357, Cys370, Cys373, Cys378, Cys381, Cys406, and Cys409.

Can form homooligomers (monomers, dimers and tetramers). Interacts with RAB11A (GDP-bound form); regulates RAB11A. Interacts with FKBP8; may negatively regulate ZFYVE27 phosphorylation. Isoform 1 interacts to a greater extent than isoform 2 with VAPB (via MSP domain). Isoform 1 interacts to a greater extent than isoform 2 with VAPA (via MSP domain). Interaction with VAPA may regulate ZFYVE27 retention in the endoplasmic reticulum and its function in cell projections formation. Interacts with ATL2, ATL3, SPAST and RTN3. Interacts with REEP1, REEP5 and ATL1. Interacts with RAB11B (GDP-bound form), SURF4, KIF5B and KIF5C. Isoform 1 and 2 interact with KIFA. In terms of processing, phosphorylated. Phosphorylation is induced by NGF through the MAPK/ERK pathway and modulates interaction with RAB11A. In terms of tissue distribution, astrocytes express both isoform 1 and isoform 2 and oligodendrocytes express only isoform 2 (at protein level). Isoform 1 is expressed specifically in the central nervous system and selectively in neuronal cells. Isoform 2 is expressed in cerebrum, cerebellum, spinal cord, heart, thymus, spleen, intestine and lung.

Its subcellular location is the recycling endosome membrane. It localises to the endoplasmic reticulum membrane. The protein resides in the cell projection. It is found in the growth cone membrane. Its function is as follows. Key regulator of RAB11-dependent vesicular trafficking during neurite extension through polarized membrane transport. Promotes axonal elongation and contributes to the establishment of neuronal cell polarity. Involved in nerve growth factor-induced neurite formation in VAPA-dependent manner. Contributes to both the formation and stabilization of the tubular ER network. Involved in ER morphogenesis by regulating the sheet-to-tubule balance and possibly the density of tubule interconnections. Acts as an adapter protein that facilitates the interaction of KIF5A with VAPA, VAPB, SURF4, RAB11A, RAB11B and RTN3 and the ZFYVE27-KIF5A complex contributes to the transport of these proteins in neurons. Can induce formation of neurite-like membrane protrusions in non-neuronal cells in a KIF5A/B-dependent manner. The chain is Protrudin (Zfyve27) from Mus musculus (Mouse).